Here is a 634-residue protein sequence, read N- to C-terminus: UPF0329 protein ECU11_2090 (634 aa).

2 stretches are compositionally biased toward basic and acidic residues: residues 354-365 (REEREKREESKG) and 397-407 (GESKEEDRGEE). The tract at residues 354 to 438 (REEREKREES…KGSGEKRISE (85 aa)) is disordered. The span at 408-417 (GGVEAEDPLE) shows a compositional bias: acidic residues.

This sequence belongs to the UPF0329 family.

The chain is UPF0329 protein ECU11_2090 from Encephalitozoon cuniculi (strain GB-M1) (Microsporidian parasite).